The following is a 345-amino-acid chain: Phosphate acyltransferase (345 aa).

This sequence belongs to the PlsX family. In terms of assembly, homodimer. Probably interacts with PlsY.

It localises to the cytoplasm. The catalysed reaction is a fatty acyl-[ACP] + phosphate = an acyl phosphate + holo-[ACP]. Its pathway is lipid metabolism; phospholipid metabolism. Its function is as follows. Catalyzes the reversible formation of acyl-phosphate (acyl-PO(4)) from acyl-[acyl-carrier-protein] (acyl-ACP). This enzyme utilizes acyl-ACP as fatty acyl donor, but not acyl-CoA. This is Phosphate acyltransferase from Trichlorobacter lovleyi (strain ATCC BAA-1151 / DSM 17278 / SZ) (Geobacter lovleyi).